Reading from the N-terminus, the 339-residue chain is Terpene synthase 9 (339 aa).

The DDxx(x)D/E motif motif lies at aspartate 79 to serine 84. The NDxxSxxxD/E motif signature appears at asparagine 219–glutamate 227.

This sequence belongs to the terpene synthase family.

It carries out the reaction (2E,6E)-farnesyl diphosphate = (-)-beta-barbatene + diphosphate. The catalysed reaction is (2E,6E)-farnesyl diphosphate = (E)-beta-farnesene + diphosphate. The enzyme catalyses (2E)-geranyl diphosphate = (Z)-beta-ocimene + diphosphate. It catalyses the reaction (2E)-geranyl diphosphate + H2O = linalool + diphosphate. It carries out the reaction (2E)-geranyl diphosphate = beta-myrcene + diphosphate. Terpene synthase that converts its substrate farnesyl diphosphate (FPP) into the sesquiterpene beta-barbatene as a major product as well as (E)-beta-farnesene as a minor product. Is also able to convert geranyl diphosphate (GPP) into a mixture of monoterpenes including (Z)-beta-ocimene, linalool, beta-myrcene, limonene and alpha-terpineol. This is Terpene synthase 9 from Dictyostelium discoideum (Social amoeba).